The following is a 48-amino-acid chain: Lantibiotic salivaricin-A (48 aa).

Positions 1–26 are excised as a propeptide; the sequence is MKNSKDILNNAIEEVSEKELMEVAGG. 2 cross-links (beta-methyllanthionine (Thr-Cys)) span residues 35 to 40 and 37 to 47; these read TITDDC and TDDCPNSVFVC. The lanthionine (Ser-Cys) cross-link spans 43–48; the sequence is SVFVCC.

The protein belongs to the type A lantibiotic family. Post-translationally, maturation of lantibiotics involves the enzymatic conversion of Thr, and Ser into dehydrated AA and the formation of thioether bonds with cysteine. This is followed by membrane translocation and cleavage of the modified precursor.

Its function is as follows. Lanthionine-containing peptide antibiotic (lantibiotic) active on Gram-positive bacteria. The bactericidal activity of lantibiotics is based on depolarization of energized bacterial cytoplasmic membranes, initiated by the formation of aqueous transmembrane pores. This is Lantibiotic salivaricin-A (salA) from Streptococcus salivarius.